We begin with the raw amino-acid sequence, 385 residues long: MATGDLKRSLRNLEQVLRSLNYPREVDCVGLVKGDTAASLPIISYSLTSYSPYVAELLVDSNIELLAKNDLRFIDTVYKLLRDQFNYKPILTKKQFIQCGFAEWKIQIICDILNCVMKKHKELSSLEKTPSQQRKKTSSAKSEPCSSTEKTSTEPVGIDVTGRFVTSGKKKAVVIRHLYNEDGANIPEDTVTDVNEAFDVCDIKAAEITIPELQVPDINCEQEDITVNPEVTALQSMLAECQEKLKKLTCIESRLESLEEKMKGKVLVNEKTWANLLSRVTLLETEMLLSKKNDEYMQFNEMSEDYSSSSDMDSLNPDRKSKEERHANIPLSSGYSTVSSDSTPRTSTVNYCGLKEISEETTMQKMERMKKMFEETAELLKCPNH.

Residues 11 to 192 (RNLEQVLRSL…GANIPEDTVT (182 aa)) are binds with microtubules and centrioles. Residues 126–154 (LEKTPSQQRKKTSSAKSEPCSSTEKTSTE) are disordered. Positions 139 to 154 (SAKSEPCSSTEKTSTE) are enriched in polar residues. Residues 230-271 (EVTALQSMLAECQEKLKKLTCIESRLESLEEKMKGKVLVNEK) are a coiled coil. The tract at residues 303–348 (SEDYSSSSDMDSLNPDRKSKEERHANIPLSSGYSTVSSDSTPRTST) is disordered. The segment covering 305–314 (DYSSSSDMDS) has biased composition (low complexity). Basic and acidic residues predominate over residues 316–327 (NPDRKSKEERHA). Residues 332–342 (SSGYSTVSSDS) are compositionally biased toward low complexity. Serine 342 is modified (phosphoserine). A Phosphothreonine modification is found at threonine 343. Residues 358-381 (SEETTMQKMERMKKMFEETAELLK) are a coiled coil.

As to quaternary structure, interacts with CROCC. Interacts with POC1B; the interaction is direct and recruits POC1B to centriolar microtubules. Binds to centriolar microtubules.

The protein localises to the cytoplasm. The protein resides in the cytoskeleton. It is found in the microtubule organizing center. It localises to the centrosome. Its subcellular location is the centriole. The protein localises to the spindle pole. The protein resides in the midbody. Its function is as follows. Centriole-enriched microtubule-binding protein involved in centriole biogenesis. In collaboration with CEP295 and POC1B, is required for the centriole-to-centrosome conversion by ensuring the formation of bona fide centriole wall. Functions as a linker component that maintains centrosome cohesion. Associates with CROCC and regulates its stability and localization to the centrosome. The sequence is that of Centrosomal protein of 44 kDa (CEP44) from Bos taurus (Bovine).